The primary structure comprises 498 residues: Calcium uptake protein, mitochondrial (498 aa).

Residues 1 to 29 constitute a mitochondrion transit peptide; sequence MPALSHYRSVSSLPSVDRSFLLIQRLRIH. EF-hand domains follow at residues 216–241, 243–278, 329–364, and 437–472; these read EFFMLFDVDNDGLISFKEYIFFVTLL, IPESSFAVAFKMFDTDNNGEIDKEEFKTVMSLMRSQ, LTEEMLRLEFAHYDYKRRGSISAKDFALSMVAAADA, and LSDNVIEIAFHVFDSNQDGNLSVDEFLRVLHRRERD. Ca(2+) is bound by residues Asp-222, Asp-224, Asp-226, Glu-233, Asp-256, Asp-258, Asn-260, Glu-262, and Glu-267. Ca(2+) contacts are provided by Asp-450, Asn-452, Asp-454, Asn-456, and Glu-461.

The protein belongs to the MICU1 family. MICU1 subfamily. As to expression, expressed in both green and non-green tissues, including roots, shoots, floral buds and pollen.

It is found in the mitochondrion inner membrane. The protein localises to the mitochondrion intermembrane space. Functionally, calcium-binding protein maintaining matrix calcium levels at low concentration. Regulates mitochondrial calcium dynamics in planta by restricting influx. The protein is Calcium uptake protein, mitochondrial of Arabidopsis thaliana (Mouse-ear cress).